The sequence spans 146 residues: Hut operon positive regulatory protein (146 aa).

Belongs to the HutP family. In terms of assembly, homohexamer.

In terms of biological role, antiterminator that binds to cis-acting regulatory sequences on the mRNA in the presence of histidine, thereby suppressing transcription termination and activating the hut operon for histidine utilization. The polypeptide is Hut operon positive regulatory protein (Bacillus mycoides (strain KBAB4) (Bacillus weihenstephanensis)).